Consider the following 1063-residue polypeptide: Presequence protease, mitochondrial (1063 aa).

The N-terminal 33 residues, 1 to 33 (MLRLANRVSRKDSGNLGIAQLKKRLLATSGVSQ), are a transit peptide targeting the mitochondrion. Residue His-105 coordinates Zn(2+). The Proton acceptor role is filled by Glu-108. His-109 lines the Zn(2+) pocket. Glu-181 is an active-site residue. Glu-206 provides a ligand contact to Zn(2+).

This sequence belongs to the peptidase M16 family. PreP subfamily. As to quaternary structure, monomer and homodimer; homodimerization is induced by binding of the substrate. The cofactor is Zn(2+).

The protein localises to the mitochondrion intermembrane space. Its subcellular location is the mitochondrion matrix. In terms of biological role, degrades mitochondrial transit peptides after their cleavage in the intermembrane space or in the matrix, and presequence peptides; clearance of these peptides is required to keep the presequence processing machinery running. Preferentially cleaves the N-terminal side of paired basic amino acid residues. Also degrades other unstructured peptides. May function as an ATP-dependent peptidase as opposed to a metalloendopeptidase. The sequence is that of Presequence protease, mitochondrial (CYM1) from Debaryomyces hansenii (strain ATCC 36239 / CBS 767 / BCRC 21394 / JCM 1990 / NBRC 0083 / IGC 2968) (Yeast).